The sequence spans 263 residues: S-acyl fatty acid synthase thioesterase, medium chain (263 aa).

M1 carries the N-acetylmethionine modification. Catalysis depends on residues S101 and H237. An important for interaction with FASN region spans residues 262-263 (LT).

This sequence belongs to the thioesterase family. In terms of assembly, interacts (via C-terminus) with FASN.

It localises to the cytoplasm. It is found in the cytosol. It catalyses the reaction (9Z)-octadecenoyl-[ACP] + H2O = (9Z)-octadecenoate + holo-[ACP] + H(+). It carries out the reaction decanoyl-CoA + H2O = decanoate + CoA + H(+). The catalysed reaction is dodecanoyl-CoA + H2O = dodecanoate + CoA + H(+). The enzyme catalyses tetradecanoyl-CoA + H2O = tetradecanoate + CoA + H(+). It catalyses the reaction hexadecanoyl-CoA + H2O = hexadecanoate + CoA + H(+). Functionally, contributes to the release of free fatty acids from fatty acid synthase (FASN). Has broad substrate specificity, giving rise to a range of free fatty acids with chain lengths between 10 and 16 carbon atoms (C10 - C16). This is S-acyl fatty acid synthase thioesterase, medium chain from Rattus norvegicus (Rat).